The chain runs to 334 residues: MKIGIDTMGGDNAPSSVIEGVAIYLTQNTQDNVVLFGNKSVIEKECVDRIKDLSRVEIVDCKEKIEFDDEPVKAIRQKKDSSIVVGLKYLKEKQIDAFVSAGSTGALMAGGLLIVGRIKGIDRPALTTKLPYKSGQYLLIDVGSNTDCRPINILQFAQMATVYASKVLGKNNPTVGLLNIGTEETKGNDLSKQSYEILKNAKNINFVGNVEARDLPFSPPDIVVCDGFVGNIVLKLTEGFGLLFFDILKDIAKLSLKAKIGGLLLKPYLKNLKGKYDYKEVGGAPLLGIDGIVIKCHGSSDGQAIFNGINQAKTFYENNVLELLKEEITAESEV.

Belongs to the PlsX family. Homodimer. Probably interacts with PlsY.

The protein resides in the cytoplasm. It catalyses the reaction a fatty acyl-[ACP] + phosphate = an acyl phosphate + holo-[ACP]. Its pathway is lipid metabolism; phospholipid metabolism. Functionally, catalyzes the reversible formation of acyl-phosphate (acyl-PO(4)) from acyl-[acyl-carrier-protein] (acyl-ACP). This enzyme utilizes acyl-ACP as fatty acyl donor, but not acyl-CoA. The protein is Phosphate acyltransferase of Caldicellulosiruptor saccharolyticus (strain ATCC 43494 / DSM 8903 / Tp8T 6331).